The chain runs to 695 residues: Threonine--tRNA ligase (695 aa).

One can recognise a TGS domain in the interval 1–76 (MPRIPSPPQA…TTTDVVEPVT (76 aa)). The tract at residues 279–585 (DHRKLGVELD…LLEHHAGAFP (307 aa)) is catalytic. Residues C384, H435, and H562 each contribute to the Zn(2+) site.

It belongs to the class-II aminoacyl-tRNA synthetase family. As to quaternary structure, homodimer. It depends on Zn(2+) as a cofactor.

The protein resides in the cytoplasm. It carries out the reaction tRNA(Thr) + L-threonine + ATP = L-threonyl-tRNA(Thr) + AMP + diphosphate + H(+). Catalyzes the attachment of threonine to tRNA(Thr) in a two-step reaction: L-threonine is first activated by ATP to form Thr-AMP and then transferred to the acceptor end of tRNA(Thr). Also edits incorrectly charged L-seryl-tRNA(Thr). This chain is Threonine--tRNA ligase, found in Leifsonia xyli subsp. xyli (strain CTCB07).